A 350-amino-acid polypeptide reads, in one-letter code: 4-hydroxythreonine-4-phosphate dehydrogenase (350 aa).

2 residues coordinate substrate: histidine 138 and threonine 139. A divalent metal cation is bound by residues histidine 173, histidine 218, and histidine 273. Substrate is bound by residues lysine 281, asparagine 290, and arginine 299.

It belongs to the PdxA family. Homodimer. Zn(2+) serves as cofactor. Requires Mg(2+) as cofactor. Co(2+) is required as a cofactor.

The protein resides in the cytoplasm. It catalyses the reaction 4-(phosphooxy)-L-threonine + NAD(+) = 3-amino-2-oxopropyl phosphate + CO2 + NADH. It participates in cofactor biosynthesis; pyridoxine 5'-phosphate biosynthesis; pyridoxine 5'-phosphate from D-erythrose 4-phosphate: step 4/5. Catalyzes the NAD(P)-dependent oxidation of 4-(phosphooxy)-L-threonine (HTP) into 2-amino-3-oxo-4-(phosphooxy)butyric acid which spontaneously decarboxylates to form 3-amino-2-oxopropyl phosphate (AHAP). The protein is 4-hydroxythreonine-4-phosphate dehydrogenase of Xanthobacter autotrophicus (strain ATCC BAA-1158 / Py2).